The sequence spans 52 residues: Ribosome modulation factor (52 aa).

Belongs to the ribosome modulation factor family.

The protein localises to the cytoplasm. Functionally, during stationary phase, converts 70S ribosomes to an inactive dimeric form (100S ribosomes). In Xenorhabdus nematophila (strain ATCC 19061 / DSM 3370 / CCUG 14189 / LMG 1036 / NCIMB 9965 / AN6), this protein is Ribosome modulation factor.